Consider the following 130-residue polypeptide: Transcription antitermination protein NusB (130 aa).

The protein belongs to the NusB family.

Its function is as follows. Involved in transcription antitermination. Required for transcription of ribosomal RNA (rRNA) genes. Binds specifically to the boxA antiterminator sequence of the ribosomal RNA (rrn) operons. The chain is Transcription antitermination protein NusB from Geobacillus kaustophilus (strain HTA426).